Consider the following 185-residue polypeptide: Peptidoglycan-recognition protein SC1a/b (185 aa).

Residues 1–21 (MVSKVALLLAVLVCSQYMAQG) form the signal peptide. The 125-residue stretch at 46–170 (SYAIIHHTAG…RQVSATECPG (125 aa)) folds into the N-acetylmuramoyl-L-alanine amidase domain. Position 51 (His-51) interacts with Zn(2+). Cys-58 and Cys-64 form a disulfide bridge. Residues His-160 and Cys-168 each coordinate Zn(2+).

This sequence belongs to the N-acetylmuramoyl-L-alanine amidase 2 family. The cofactor is Zn(2+).

It is found in the secreted. It catalyses the reaction Hydrolyzes the link between N-acetylmuramoyl residues and L-amino acid residues in certain cell-wall glycopeptides.. N-acetylmuramyl-L-alanine amidase involved in innate immunity by degrading bacterial peptidoglycans (PGN). Plays a scavenger role by digesting biologically active PGN into biologically inactive fragments. Has no direct bacteriolytic activity. The chain is Peptidoglycan-recognition protein SC1a/b (PGRP-SC1a) from Drosophila simulans (Fruit fly).